Reading from the N-terminus, the 186-residue chain is Golgi apparatus membrane protein-like protein ECHIDNA (186 aa).

The residue at position 1 (Met1) is an N-acetylmethionine. 3 consecutive transmembrane segments (helical) span residues 35 to 55, 108 to 128, and 132 to 152; these read ILSA…VLLA, FWWT…FSLI, and ADYL…IIGF.

This sequence belongs to the TVP23 family. In terms of assembly, component of a trans-Golgi network (TGN)-localized ECH/YIP4 complex made of ECH, YIP4A and YIP4B. Interacts directly with YIP4A and YIP4B.

Its subcellular location is the golgi apparatus. The protein localises to the trans-Golgi network membrane. It is found in the early endosome membrane. In terms of biological role, mediates trans-Golgi-network trafficking and cell elongation. Required for keeping the appropriate balance between secretory trafficking and vacuolar targeting of a subset of proteins. The ECH/YIP4 complex is involved in the modulation of the trans-Golgi network (TGN)-mediated trafficking of some proteins and cell wall components (e.g. pectin and hemicellulose) to the cell wall in dark-grown hypocotyls and in secretory cells of the seed coat. This is Golgi apparatus membrane protein-like protein ECHIDNA from Arabidopsis thaliana (Mouse-ear cress).